The sequence spans 434 residues: Serine hydroxymethyltransferase (434 aa).

(6S)-5,6,7,8-tetrahydrofolate is bound by residues Leu128 and 132-134; that span reads GHL. Lys237 carries the post-translational modification N6-(pyridoxal phosphate)lysine.

This sequence belongs to the SHMT family. As to quaternary structure, homodimer. The cofactor is pyridoxal 5'-phosphate.

It is found in the cytoplasm. It catalyses the reaction (6R)-5,10-methylene-5,6,7,8-tetrahydrofolate + glycine + H2O = (6S)-5,6,7,8-tetrahydrofolate + L-serine. Its pathway is one-carbon metabolism; tetrahydrofolate interconversion. It participates in amino-acid biosynthesis; glycine biosynthesis; glycine from L-serine: step 1/1. Catalyzes the reversible interconversion of serine and glycine with tetrahydrofolate (THF) serving as the one-carbon carrier. This reaction serves as the major source of one-carbon groups required for the biosynthesis of purines, thymidylate, methionine, and other important biomolecules. Also exhibits THF-independent aldolase activity toward beta-hydroxyamino acids, producing glycine and aldehydes, via a retro-aldol mechanism. The chain is Serine hydroxymethyltransferase from Corynebacterium glutamicum (strain R).